The primary structure comprises 231 residues: Ribose-5-phosphate isomerase A (231 aa).

Substrate-binding positions include 31–34, 86–89, and 100–103; these read TGST, DGAD, and KGLG. The active-site Proton acceptor is E109. K127 is a binding site for substrate.

This sequence belongs to the ribose 5-phosphate isomerase family. Homodimer.

It catalyses the reaction aldehydo-D-ribose 5-phosphate = D-ribulose 5-phosphate. It participates in carbohydrate degradation; pentose phosphate pathway; D-ribose 5-phosphate from D-ribulose 5-phosphate (non-oxidative stage): step 1/1. Its function is as follows. Catalyzes the reversible conversion of ribose-5-phosphate to ribulose 5-phosphate. The sequence is that of Ribose-5-phosphate isomerase A from Gluconobacter oxydans (strain 621H) (Gluconobacter suboxydans).